Consider the following 255-residue polypeptide: Small ribosomal subunit protein eS1 (255 aa).

Ala2 is modified (N-acetylalanine; partial).

Belongs to the eukaryotic ribosomal protein eS1 family. In terms of assembly, component of the small ribosomal subunit. Mature ribosomes consist of a small (40S) and a large (60S) subunit. The 40S subunit contains about 33 different proteins and 1 molecule of RNA (18S). The 60S subunit contains about 49 different proteins and 3 molecules of RNA (25S, 5.8S and 5S).

The protein localises to the cytoplasm. This Kluyveromyces lactis (strain ATCC 8585 / CBS 2359 / DSM 70799 / NBRC 1267 / NRRL Y-1140 / WM37) (Yeast) protein is Small ribosomal subunit protein eS1.